The chain runs to 253 residues: Triosephosphate isomerase (253 aa).

9 to 11 (NWK) is a substrate binding site. Residue His-97 is the Electrophile of the active site. Glu-169 (proton acceptor) is an active-site residue. Substrate-binding positions include Gly-175, Ser-215, and 236–237 (GG).

The protein belongs to the triosephosphate isomerase family. Homodimer.

The protein localises to the cytoplasm. It carries out the reaction D-glyceraldehyde 3-phosphate = dihydroxyacetone phosphate. The protein operates within carbohydrate biosynthesis; gluconeogenesis. It functions in the pathway carbohydrate degradation; glycolysis; D-glyceraldehyde 3-phosphate from glycerone phosphate: step 1/1. Functionally, involved in the gluconeogenesis. Catalyzes stereospecifically the conversion of dihydroxyacetone phosphate (DHAP) to D-glyceraldehyde-3-phosphate (G3P). The sequence is that of Triosephosphate isomerase from Staphylococcus epidermidis (strain ATCC 35984 / DSM 28319 / BCRC 17069 / CCUG 31568 / BM 3577 / RP62A).